Consider the following 327-residue polypeptide: o-succinylbenzoate synthase (327 aa).

The active-site Proton donor is the lysine 110. The Mg(2+) site is built by aspartate 138, glutamate 165, and aspartate 188. Lysine 212 (proton acceptor) is an active-site residue.

The protein belongs to the mandelate racemase/muconate lactonizing enzyme family. MenC type 1 subfamily. The cofactor is a divalent metal cation.

It carries out the reaction (1R,6R)-6-hydroxy-2-succinyl-cyclohexa-2,4-diene-1-carboxylate = 2-succinylbenzoate + H2O. It participates in quinol/quinone metabolism; 1,4-dihydroxy-2-naphthoate biosynthesis; 1,4-dihydroxy-2-naphthoate from chorismate: step 4/7. Its pathway is quinol/quinone metabolism; menaquinone biosynthesis. In terms of biological role, converts 2-succinyl-6-hydroxy-2,4-cyclohexadiene-1-carboxylate (SHCHC) to 2-succinylbenzoate (OSB). The chain is o-succinylbenzoate synthase from Mycobacterium ulcerans (strain Agy99).